We begin with the raw amino-acid sequence, 197 residues long: Recombination protein RecR (197 aa).

A C4-type zinc finger spans residues 56-71; that stretch reads CQQCRNLSETEICGFC. The 96-residue stretch at 79 to 174 folds into the Toprim domain; sequence DQLCIVETPT…SVTRLAQGIP (96 aa).

Belongs to the RecR family.

In terms of biological role, may play a role in DNA repair. It seems to be involved in an RecBC-independent recombinational process of DNA repair. It may act with RecF and RecO. This chain is Recombination protein RecR, found in Hydrogenovibrio crunogenus (strain DSM 25203 / XCL-2) (Thiomicrospira crunogena).